A 67-amino-acid chain; its full sequence is Archaeal histone HAN1 subunit A (67 aa).

2 interaction with DNA regions span residues 20-22 and 54-57; these read RVS and KTVK.

This sequence belongs to the archaeal histone HMF family. Heterodimer. Dimers then assemble into higher oligomers, with the DNA wrapped around the protein core.

Its subcellular location is the cytoplasm. It is found in the chromosome. Its function is as follows. Binds and compact DNA (95 to 150 base pairs) to form nucleosome-like structures that contain positive DNA supercoils. Increases the resistance of DNA to thermal denaturation (in vitro). The polypeptide is Archaeal histone HAN1 subunit A (han1A) (Thermococcus zilligii).